The sequence spans 371 residues: MSIDDKVRAIVKEFKAYVPGKSKEEIARNYGIDPEKIIKLGSNENPWGCSPKIAEKLMNEVSNLHQYPQPINPELMDEISKFTKMPTENIIVGGDGADEVIDNIMRILIDEGDEVIIPIPTFTQYAISAKIHGANIKWAKFDEENGFKLDVESVLNNITEKTKVIFLCTPNNPTGNVIPTEDIKKIVESTDALVMIDHAYIEYSKGEYDLTNWALKYDNVLVLRTFSKVFGLAGQRVGFGVTSKKIVDYMMRIKPIFSLTRASQVSAITALQDKEFFDRCLKEGIESREQIYNGLKKFKQLEVYPTEANYMLVKVKNGMNSSEFCEALLKKGVIVRDCYSFEGLEPYYFRISIGTFEENERFLKIMSEIVE.

K228 carries the N6-(pyridoxal phosphate)lysine modification.

This sequence belongs to the class-II pyridoxal-phosphate-dependent aminotransferase family. Histidinol-phosphate aminotransferase subfamily. Requires pyridoxal 5'-phosphate as cofactor.

The enzyme catalyses L-histidinol phosphate + 2-oxoglutarate = 3-(imidazol-4-yl)-2-oxopropyl phosphate + L-glutamate. It functions in the pathway amino-acid biosynthesis; L-histidine biosynthesis; L-histidine from 5-phospho-alpha-D-ribose 1-diphosphate: step 7/9. In Methanococcus maripaludis (strain C5 / ATCC BAA-1333), this protein is Histidinol-phosphate aminotransferase.